A 133-amino-acid polypeptide reads, in one-letter code: Phosphoribosyl-AMP cyclohydrolase (133 aa).

Aspartate 77 serves as a coordination point for Mg(2+). Position 78 (cysteine 78) interacts with Zn(2+). 2 residues coordinate Mg(2+): aspartate 79 and aspartate 81. The Zn(2+) site is built by cysteine 95 and cysteine 102.

Belongs to the PRA-CH family. Homodimer. Mg(2+) is required as a cofactor. It depends on Zn(2+) as a cofactor.

The protein resides in the cytoplasm. The catalysed reaction is 1-(5-phospho-beta-D-ribosyl)-5'-AMP + H2O = 1-(5-phospho-beta-D-ribosyl)-5-[(5-phospho-beta-D-ribosylamino)methylideneamino]imidazole-4-carboxamide. The protein operates within amino-acid biosynthesis; L-histidine biosynthesis; L-histidine from 5-phospho-alpha-D-ribose 1-diphosphate: step 3/9. Functionally, catalyzes the hydrolysis of the adenine ring of phosphoribosyl-AMP. This chain is Phosphoribosyl-AMP cyclohydrolase, found in Azotobacter vinelandii (strain DJ / ATCC BAA-1303).